The primary structure comprises 153 residues: Small ribosomal subunit protein uS19 (153 aa).

The tract at residues 1 to 63 is unknown; that stretch reads MGFRGAWNKR…QEIWDEFRAF (63 aa). Residues 64 to 153 form a small ribosomal subunit protein uS19 region; the sequence is VNKKAWVDPK…EKSAKVVKKK (90 aa).

This sequence belongs to the universal ribosomal protein uS19 family.

Its function is as follows. Protein S19 forms a complex with S13 that binds strongly to the 16S ribosomal RNA. The polypeptide is Small ribosomal subunit protein uS19 (Hydrogenobaculum sp. (strain Y04AAS1)).